The chain runs to 505 residues: Histidine ammonia-lyase (505 aa).

Residues 141–143 (ASG) constitute a cross-link (5-imidazolinone (Ala-Gly)). Ser142 is modified (2,3-didehydroalanine (Ser)).

Belongs to the PAL/histidase family. In terms of processing, contains an active site 4-methylidene-imidazol-5-one (MIO), which is formed autocatalytically by cyclization and dehydration of residues Ala-Ser-Gly.

The protein localises to the cytoplasm. The catalysed reaction is L-histidine = trans-urocanate + NH4(+). Its pathway is amino-acid degradation; L-histidine degradation into L-glutamate; N-formimidoyl-L-glutamate from L-histidine: step 1/3. This is Histidine ammonia-lyase from Bacillus cytotoxicus (strain DSM 22905 / CIP 110041 / 391-98 / NVH 391-98).